A 183-amino-acid chain; its full sequence is Small ribosomal subunit protein uS4c (183 aa).

The S4 RNA-binding domain occupies 82–143 (MRLDNILFRL…KQRSKALIQN (62 aa)).

Belongs to the universal ribosomal protein uS4 family. Part of the 30S ribosomal subunit. Contacts protein S5. The interaction surface between S4 and S5 is involved in control of translational fidelity.

The protein resides in the plastid. The protein localises to the chloroplast. Functionally, one of the primary rRNA binding proteins, it binds directly to 16S rRNA where it nucleates assembly of the body of the 30S subunit. With S5 and S12 plays an important role in translational accuracy. The chain is Small ribosomal subunit protein uS4c (rps4) from Crocosmia sp. (strain Porto Alegre 034).